Here is a 342-residue protein sequence, read N- to C-terminus: MPWPPVFGKVFMSPLQDGFSRRFYYLRLSITDVCNFRCTYCLPDGYRPPAGGKVGRQPFLSLEEIRRVVSGFAAMGTRKVRLTGGEPSLRRDFTAIIETVANTPGIEKVAMTTNGYRLKERAREWFDAGLTALNVSVDSLDPRQFHQITGENKLAEVMDGIEAALAAGFKSVKINAVLLKGLNDHQLDAFLAWIRHKPIELRFIELMQTGEMDTLFRDHHASGALIKQRLLDAGWLQQLRGADDGPAQVFMHPESMGGVGLIMPYSKDFCAGCNRLRVSSLGKLHLCLFGDHGVELRDLLTADGQQDELQQRIRSALVGKAATHRLHEGNAGMTPHLASIGG.

One can recognise a Radical SAM core domain in the interval 18 to 247 (GFSRRFYYLR…QLRGADDGPA (230 aa)). Arg-27 contacts GTP. Residues Cys-34 and Cys-38 each contribute to the [4Fe-4S] cluster site. Residue Tyr-40 coordinates S-adenosyl-L-methionine. Residue Cys-41 coordinates [4Fe-4S] cluster. A GTP-binding site is contributed by Arg-81. Gly-85 provides a ligand contact to S-adenosyl-L-methionine. A GTP-binding site is contributed by Thr-112. Residue Ser-136 participates in S-adenosyl-L-methionine binding. Lys-173 serves as a coordination point for GTP. Position 207 (Met-207) interacts with S-adenosyl-L-methionine. [4Fe-4S] cluster is bound by residues Cys-270 and Cys-273. 275 to 277 (RLR) contributes to the GTP binding site. Cys-287 is a binding site for [4Fe-4S] cluster.

The protein belongs to the radical SAM superfamily. MoaA family. As to quaternary structure, monomer and homodimer. It depends on [4Fe-4S] cluster as a cofactor.

The enzyme catalyses GTP + AH2 + S-adenosyl-L-methionine = (8S)-3',8-cyclo-7,8-dihydroguanosine 5'-triphosphate + 5'-deoxyadenosine + L-methionine + A + H(+). Its pathway is cofactor biosynthesis; molybdopterin biosynthesis. Functionally, catalyzes the cyclization of GTP to (8S)-3',8-cyclo-7,8-dihydroguanosine 5'-triphosphate. The polypeptide is GTP 3',8-cyclase (Aeromonas hydrophila subsp. hydrophila (strain ATCC 7966 / DSM 30187 / BCRC 13018 / CCUG 14551 / JCM 1027 / KCTC 2358 / NCIMB 9240 / NCTC 8049)).